We begin with the raw amino-acid sequence, 339 residues long: Ketol-acid reductoisomerase (NADP(+)) (339 aa).

The region spanning 1–182 is the KARI N-terminal Rossmann domain; it reads MRVYYDRDAD…GGGRAGIIET (182 aa). NADP(+) is bound by residues 24 to 27, Arg48, Ser51, Thr53, and 83 to 86; these read YGSQ and DELQ. His108 is a catalytic residue. An NADP(+)-binding site is contributed by Gly134. The 146-residue stretch at 183–328 folds into the KARI C-terminal knotted domain; sequence TFREECETDL…AKLRAMMPWI (146 aa). Mg(2+) is bound by residues Asp191, Glu195, Glu227, and Glu231. Ser252 contacts substrate.

This sequence belongs to the ketol-acid reductoisomerase family. Requires Mg(2+) as cofactor.

The enzyme catalyses (2R)-2,3-dihydroxy-3-methylbutanoate + NADP(+) = (2S)-2-acetolactate + NADPH + H(+). It carries out the reaction (2R,3R)-2,3-dihydroxy-3-methylpentanoate + NADP(+) = (S)-2-ethyl-2-hydroxy-3-oxobutanoate + NADPH + H(+). The protein operates within amino-acid biosynthesis; L-isoleucine biosynthesis; L-isoleucine from 2-oxobutanoate: step 2/4. Its pathway is amino-acid biosynthesis; L-valine biosynthesis; L-valine from pyruvate: step 2/4. Its function is as follows. Involved in the biosynthesis of branched-chain amino acids (BCAA). Catalyzes an alkyl-migration followed by a ketol-acid reduction of (S)-2-acetolactate (S2AL) to yield (R)-2,3-dihydroxy-isovalerate. In the isomerase reaction, S2AL is rearranged via a Mg-dependent methyl migration to produce 3-hydroxy-3-methyl-2-ketobutyrate (HMKB). In the reductase reaction, this 2-ketoacid undergoes a metal-dependent reduction by NADPH to yield (R)-2,3-dihydroxy-isovalerate. This chain is Ketol-acid reductoisomerase (NADP(+)), found in Methylocella silvestris (strain DSM 15510 / CIP 108128 / LMG 27833 / NCIMB 13906 / BL2).